We begin with the raw amino-acid sequence, 237 residues long: Cyclic nucleotide phosphodiesterase inhibitor (237 aa).

The signal sequence occupies residues 1-20; that stretch reads MAKIIISLILLLSLFSFSYG. Asn-28, Asn-65, and Asn-70 each carry an N-linked (GlcNAc...) asparagine glycan. 5 Cys-rich CT repeats span residues 57–81, 82–105, 116–139, 140–162, and 163–186; these read DLCH…CNDN, NPCT…CDPG, DPCT…CNDG, DACT…CDDN, and DPCT…CSIK. The N-linked (GlcNAc...) asparagine glycan is linked to Asn-153. Residue Asn-207 is glycosylated (N-linked (GlcNAc...) asparagine).

Functionally, PDI acts by binding stoichiometrically to cyclic nucleotide phosphodiesterase, changing the KM of the enzyme for cAMP from 10 uM to 2 mM. This is Cyclic nucleotide phosphodiesterase inhibitor (pdiA) from Dictyostelium discoideum (Social amoeba).